Reading from the N-terminus, the 74-residue chain is Conotoxin Bu4 (74 aa).

The first 22 residues, 1–22 (MKLTCVVIVAVLLLTACQLIIA), serve as a signal peptide directing secretion. Positions 23-45 (EDSRGTQLHRALRKATKLSVSTR) are excised as a propeptide. 3 cysteine pairs are disulfide-bonded: C47-C63, C54-C66, and C62-C73.

Belongs to the conotoxin O1 superfamily. As to expression, expressed by the venom duct.

The protein resides in the secreted. This Conus bullatus (Bubble cone) protein is Conotoxin Bu4.